Reading from the N-terminus, the 184-residue chain is Photosystem I assembly protein Ycf4 (184 aa).

2 consecutive transmembrane segments (helical) span residues 19-39 (ISNLCWAFILFLGSLGFFLVG) and 57-77 (IIFFPQGIVMSFYGIAGLFIS).

It belongs to the Ycf4 family.

The protein resides in the plastid thylakoid membrane. In terms of biological role, seems to be required for the assembly of the photosystem I complex. The polypeptide is Photosystem I assembly protein Ycf4 (Cuscuta exaltata (Tall dodder)).